Consider the following 526-residue polypeptide: Peptide chain release factor 3 (526 aa).

Residues 8 to 277 (NKRRTFAIIS…GLTEWAPKPQ (270 aa)) form the tr-type G domain. GTP-binding positions include 17–24 (SHPDAGKT), 85–89 (DTPGH), and 139–142 (NKLD).

Belongs to the TRAFAC class translation factor GTPase superfamily. Classic translation factor GTPase family. PrfC subfamily.

Its subcellular location is the cytoplasm. In terms of biological role, increases the formation of ribosomal termination complexes and stimulates activities of RF-1 and RF-2. It binds guanine nucleotides and has strong preference for UGA stop codons. It may interact directly with the ribosome. The stimulation of RF-1 and RF-2 is significantly reduced by GTP and GDP, but not by GMP. The protein is Peptide chain release factor 3 of Actinobacillus pleuropneumoniae serotype 5b (strain L20).